The following is a 467-amino-acid chain: tRNA modification GTPase MnmE (467 aa).

(6S)-5-formyl-5,6,7,8-tetrahydrofolate contacts are provided by Arg-30, Glu-92, and Arg-131. The TrmE-type G domain occupies 226–388; it reads GLKVAIIGRP…LEAAILNAVN (163 aa). Asn-236 serves as a coordination point for K(+). GTP contacts are provided by residues 236 to 241, 255 to 261, and 280 to 283; these read NVGKSS, TDLPGTT, and DTAG. A Mg(2+)-binding site is contributed by Ser-240. Positions 255, 257, and 260 each coordinate K(+). Residue Thr-261 participates in Mg(2+) binding. Lys-467 is a binding site for (6S)-5-formyl-5,6,7,8-tetrahydrofolate.

The protein belongs to the TRAFAC class TrmE-Era-EngA-EngB-Septin-like GTPase superfamily. TrmE GTPase family. In terms of assembly, homodimer. Heterotetramer of two MnmE and two MnmG subunits. The cofactor is K(+).

Its subcellular location is the cytoplasm. Its function is as follows. Exhibits a very high intrinsic GTPase hydrolysis rate. Involved in the addition of a carboxymethylaminomethyl (cmnm) group at the wobble position (U34) of certain tRNAs, forming tRNA-cmnm(5)s(2)U34. The protein is tRNA modification GTPase MnmE of Trichodesmium erythraeum (strain IMS101).